A 413-amino-acid chain; its full sequence is N-acylneuraminate cytidylyltransferase (413 aa).

It belongs to the CMP-NeuNAc synthase family. The cofactor is Mg(2+). It depends on Mn(2+) as a cofactor.

It is found in the cytoplasm. The catalysed reaction is an N-acylneuraminate + CTP = a CMP-N-acyl-beta-neuraminate + diphosphate. In terms of biological role, catalyzes the formation of CMP-N-acetylneuraminic acid (CMP-NeuNAc), which is essential for the formation of the capsule. This is N-acylneuraminate cytidylyltransferase (neuA) from Streptococcus agalactiae serotype V (strain ATCC BAA-611 / 2603 V/R).